Here is a 755-residue protein sequence, read N- to C-terminus: Lysosome membrane protein 2-B (755 aa).

At 1–6 the chain is on the cytoplasmic side; it reads MKHIGR. A helical transmembrane segment spans residues 7–27; sequence IVSFPIGLVLIAVGIIIFVVV. Asn-28, Asn-76, Asn-379, Asn-465, Asn-497, Asn-588, Asn-607, and Asn-680 each carry an N-linked (GlcNAc...) asparagine glycan. The Lumenal portion of the chain corresponds to 28–727; the sequence is NRTIKDEFKK…AYKVDSFRYA (700 aa). Residues 728-748 traverse the membrane as a helical segment; sequence ITVILIVVGGFLSLISGGLFV. The Cytoplasmic portion of the chain corresponds to 749–755; sequence LDKIIDL. Positions 752–753 match the Di-leucine motif motif; the sequence is II.

This sequence belongs to the CD36 family. In terms of processing, heavily glycosylated.

The protein localises to the lysosome membrane. In terms of biological role, may act as a lysosomal receptor. May be involved in macropinocytosis and fluid phase exocytosis. This is Lysosome membrane protein 2-B (lmpB) from Dictyostelium discoideum (Social amoeba).